Reading from the N-terminus, the 140-residue chain is ATP synthase epsilon chain (140 aa).

It belongs to the ATPase epsilon chain family. In terms of assembly, F-type ATPases have 2 components, CF(1) - the catalytic core - and CF(0) - the membrane proton channel. CF(1) has five subunits: alpha(3), beta(3), gamma(1), delta(1), epsilon(1). CF(0) has three main subunits: a, b and c.

The protein localises to the cell inner membrane. Its function is as follows. Produces ATP from ADP in the presence of a proton gradient across the membrane. This chain is ATP synthase epsilon chain, found in Pseudoalteromonas translucida (strain TAC 125).